The sequence spans 417 residues: Inhibitor of growth protein 3 (417 aa).

Disordered regions lie at residues 128 to 203 (TPSQ…YNTN) and 286 to 320 (QTLS…SSSS). The segment covering 136 to 152 (HHAHSHTPVEKRKHNPS) has biased composition (basic residues). The span at 156–168 (GATDHVPEKKFKS) shows a compositional bias: basic and acidic residues. Low complexity-rich tracts occupy residues 189-203 (NNNS…YNTN), 286-295 (QTLSSSSTDS), and 307-320 (SSSQ…SSSS). Residues 359–408 (PRYCICNQVSYGEMVGCDNQDCPIEWFHYGCVGLTEAPKGKWYCPQCTAA) form a PHD-type zinc finger. Positions 362, 364, 375, 380, 386, 389, 402, and 405 each coordinate Zn(2+).

The protein belongs to the ING family. In terms of assembly, interacts with H3K4me3 and to a lesser extent with H3K4me2. Component of the NuA4 histone acetyltransferase complex.

It is found in the nucleus. In terms of biological role, component of the NuA4 histone acetyltransferase (HAT) complex which is involved in transcriptional activation of select genes principally by acetylation of nucleosomal histone H4 and H2A. This modification may both alter nucleosome - DNA interactions and promote interaction of the modified histones with other proteins which positively regulate transcription. NuA4 may also play a direct role in DNA repair when directly recruited to sites of DNA damage. The chain is Inhibitor of growth protein 3 (ING3) from Gallus gallus (Chicken).